We begin with the raw amino-acid sequence, 189 residues long: NADH-quinone oxidoreductase subunit B (189 aa).

Residues C39, C40, C104, and C135 each coordinate [4Fe-4S] cluster.

This sequence belongs to the complex I 20 kDa subunit family. NDH-1 is composed of 14 different subunits. Subunits NuoB, C, D, E, F, and G constitute the peripheral sector of the complex. Requires [4Fe-4S] cluster as cofactor.

The protein localises to the cell inner membrane. The enzyme catalyses a quinone + NADH + 5 H(+)(in) = a quinol + NAD(+) + 4 H(+)(out). Functionally, NDH-1 shuttles electrons from NADH, via FMN and iron-sulfur (Fe-S) centers, to quinones in the respiratory chain. The immediate electron acceptor for the enzyme in this species is believed to be a menaquinone. Couples the redox reaction to proton translocation (for every two electrons transferred, four hydrogen ions are translocated across the cytoplasmic membrane), and thus conserves the redox energy in a proton gradient. In Pelodictyon phaeoclathratiforme (strain DSM 5477 / BU-1), this protein is NADH-quinone oxidoreductase subunit B.